Here is a 207-residue protein sequence, read N- to C-terminus: Lipid A acyltransferase PagP (207 aa).

Residues 1-24 (MKFDLTTAYTLSIPLLASSGTVLA) form the signal peptide. Active-site residues include H79, D122, and S123.

It belongs to the lipid A palmitoyltransferase family. In terms of assembly, homodimer.

It is found in the cell outer membrane. It catalyses the reaction a lipid A + a 1,2-diacyl-sn-glycero-3-phosphocholine = a hepta-acyl lipid A + a 2-acyl-sn-glycero-3-phosphocholine. It carries out the reaction a lipid IVA + a 1,2-diacyl-sn-glycero-3-phosphocholine = a lipid IVB + a 2-acyl-sn-glycero-3-phosphocholine. The enzyme catalyses a lipid IIA + a 1,2-diacyl-sn-glycero-3-phosphocholine = a lipid IIB + a 2-acyl-sn-glycero-3-phosphocholine. Its function is as follows. Transfers a fatty acid residue from the sn-1 position of a phospholipid to the N-linked hydroxyfatty acid chain on the proximal unit of lipid A or its precursors. This Photorhabdus asymbiotica subsp. asymbiotica (strain ATCC 43949 / 3105-77) (Xenorhabdus luminescens (strain 2)) protein is Lipid A acyltransferase PagP.